We begin with the raw amino-acid sequence, 130 residues long: Vascular-related unknown protein 3 (130 aa).

The segment at 45–81 is disordered; it reads DDSSMMSDAASPMGCVEEDTASSPSNRTEGYSGMEDN.

Its function is as follows. Involved in the regulation of plant growth. The protein is Vascular-related unknown protein 3 of Arabidopsis thaliana (Mouse-ear cress).